Consider the following 316-residue polypeptide: Pleckstrin homology domain-containing family F member 1 homolog (316 aa).

Residues 35–131 (VLVGEGVLTK…WMAHINKCVE (97 aa)) form the PH domain. The segment at 152–212 (DTDASVCMHC…VCDACYERLK (61 aa)) adopts an FYVE-type zinc-finger fold. The Zn(2+) site is built by C158, C161, C175, C178, C183, C186, C204, and C207. The tract at residues 215-316 (PSSLGSGEDS…AAVATTGSHC (102 aa)) is disordered. Positions 244–253 (SNDEDSDEET) are enriched in acidic residues. Residues 279–292 (SSTITSPSSATTGS) show a composition bias toward low complexity. The segment covering 298-316 (VTPSVQSSPAAVATTGSHC) has biased composition (polar residues).

In terms of assembly, interacts with Gdi (Rab GDP dissociation inhibitor). In terms of tissue distribution, in ovaries, expressed both in the germ line cells and in the overlying somatic follicular epithelium.

The protein localises to the apical cell membrane. Its subcellular location is the endosome membrane. It localises to the cytoplasm. The protein resides in the cell cortex. Functionally, functions in the regulation of endosome morphology and late endosome formation. Has a role in controlling trafficking from early to late endosomes and from late endosomes to lysosomes. Important for localization of Gdi to the endosomal membranes. May function in controlling the activity of multiple regulators in the endocytic pathway, perhaps by positively controlling those involved in the early steps of endocytosis such as Rab5 and hrs, and negative regulating those involved in the late stages of endocytosis like car and VhaSFD. The protein is Pleckstrin homology domain-containing family F member 1 homolog of Drosophila melanogaster (Fruit fly).